A 226-amino-acid polypeptide reads, in one-letter code: Small ribosomal subunit protein uS2c (226 aa).

The protein belongs to the universal ribosomal protein uS2 family.

Its subcellular location is the plastid. The protein resides in the chloroplast. The chain is Small ribosomal subunit protein uS2c (rps2) from Phaeodactylum tricornutum (strain CCAP 1055/1).